The sequence spans 133 residues: Large ribosomal subunit protein bL20 (133 aa).

Belongs to the bacterial ribosomal protein bL20 family.

In terms of biological role, binds directly to 23S ribosomal RNA and is necessary for the in vitro assembly process of the 50S ribosomal subunit. It is not involved in the protein synthesizing functions of that subunit. This chain is Large ribosomal subunit protein bL20, found in Chelativorans sp. (strain BNC1).